A 253-amino-acid polypeptide reads, in one-letter code: ATP synthase subunit a (253 aa).

Helical transmembrane passes span 30–50 (FTNA…VLLA), 88–108 (FFPF…IGLV), 118–138 (IAVT…YGLI), 144–164 (FLGI…MIMI), 184–204 (MLAG…LLGA), and 211–231 (VAPL…LVAF).

It belongs to the ATPase A chain family. In terms of assembly, F-type ATPases have 2 components, CF(1) - the catalytic core - and CF(0) - the membrane proton channel. CF(1) has five subunits: alpha(3), beta(3), gamma(1), delta(1), epsilon(1). CF(0) has three main subunits: a(1), b(2) and c(9-12). The alpha and beta chains form an alternating ring which encloses part of the gamma chain. CF(1) is attached to CF(0) by a central stalk formed by the gamma and epsilon chains, while a peripheral stalk is formed by the delta and b chains.

It is found in the cell inner membrane. Functionally, key component of the proton channel; it plays a direct role in the translocation of protons across the membrane. This chain is ATP synthase subunit a, found in Beijerinckia indica subsp. indica (strain ATCC 9039 / DSM 1715 / NCIMB 8712).